The following is a 536-amino-acid chain: Phosphoenolpyruvate carboxykinase (ATP) (536 aa).

Residues R61, Y195, and K201 each coordinate substrate. Residues K201, H220, and 236 to 244 (GLSGTGKTT) each bind ATP. 2 residues coordinate Mn(2+): K201 and H220. D257 serves as a coordination point for Mn(2+). 3 residues coordinate ATP: E285, R323, and T448. R323 is a substrate binding site.

This sequence belongs to the phosphoenolpyruvate carboxykinase (ATP) family. Mn(2+) is required as a cofactor.

It localises to the cytoplasm. The catalysed reaction is oxaloacetate + ATP = phosphoenolpyruvate + ADP + CO2. It functions in the pathway carbohydrate biosynthesis; gluconeogenesis. Functionally, involved in the gluconeogenesis. Catalyzes the conversion of oxaloacetate (OAA) to phosphoenolpyruvate (PEP) through direct phosphoryl transfer between the nucleoside triphosphate and OAA. This is Phosphoenolpyruvate carboxykinase (ATP) from Methylobacterium sp. (strain 4-46).